A 227-amino-acid chain; its full sequence is Triggering receptor expressed on myeloid cells 2 (227 aa).

The signal sequence occupies residues 1 to 18; it reads MGPLHQFLLLLITALSQA. Topologically, residues 19–171 are extracellular; that stretch reads LNTTVLQGMA…NQETSFPPTS (153 aa). Asn20 is a glycosylation site (N-linked (GlcNAc...) asparagine). Positions 29–112 constitute an Ig-like V-type domain; it reads GQSLRVSCTY…GDAGLYQCQS (84 aa). Intrachain disulfides connect Cys36–Cys110 and Cys51–Cys60. His67 provides a ligand contact to a 1,2-diacyl-sn-glycero-3-phospho-L-serine. Asn79 carries an N-linked (GlcNAc...) asparagine glycan. An a 1,2-diacyl-sn-glycero-3-phospho-L-serine-binding site is contributed by Thr88. The helical transmembrane segment at 172–192 threads the bilayer; the sequence is ILLLLACVLLSKFLAASILWA. The Cytoplasmic portion of the chain corresponds to 193 to 227; the sequence is VARGRQKPGTPVVRGLDCGQDAGHQLQILTGPGGT.

In terms of assembly, monomer. After ectodomain shedding, the extracellular domain oligomerizes, which is enhanced and stabilized by binding of phosphatidylserine. Interacts with TYROBP/DAP12. Interaction with TYROBP is required for stabilization of the TREM2 C-terminal fragment (TREM2-CTF) which is produced by proteolytic processing. Interacts with PLXNA1 (via TIG domains); the interaction mediates SEMA6D binding and signaling through TYROBP. Post-translationally, undergoes ectodomain shedding through proteolytic cleavage by ADAM10 and ADAM17 to produce a transmembrane segment, the TREM2 C-terminal fragment (TREM2-CTF), which is subsequently cleaved by gamma-secretase. In terms of tissue distribution, expressed in the brain, specifically in microglia (at protein level). Expressed in macrophages (at protein level). Expressed at higher levels in the CNS, heart and lung than in lymph nodes or in other non-lymphoid tissues such as kidney, liver and testis. In the CNS not all microglia express TREM2. Brain regions with an incomplete blood-brain barrier had the lowest percentages of TREM2 expressing microglia, whereas the lateral entorhinal and cingulate cortex had the highest percentages.

Its subcellular location is the cell membrane. It localises to the secreted. Forms a receptor signaling complex with TYROBP which mediates signaling and cell activation following ligand binding. Acts as a receptor for amyloid-beta protein 42, a cleavage product of the amyloid-beta precursor protein APP, and mediates its uptake and degradation by microglia. Binding to amyloid-beta 42 mediates microglial activation, proliferation, migration, apoptosis and expression of pro-inflammatory cytokines, such as IL6R and CCL3, and the anti-inflammatory cytokine ARG1. Acts as a receptor for lipoprotein particles such as LDL, VLDL, and HDL and for apolipoproteins such as APOA1, APOA2, APOB, APOE, APOE2, APOE3, APOE4, and CLU and enhances their uptake in microglia. Binds phospholipids (preferably anionic lipids) such as phosphatidylserine, phosphatidylethanolamine, phosphatidylglycerol and sphingomyelin. Regulates microglial proliferation by acting as an upstream regulator of the Wnt/beta-catenin signaling cascade. Required for microglial phagocytosis of apoptotic neurons. Also required for microglial activation and phagocytosis of myelin debris after neuronal injury and of neuronal synapses during synapse elimination in the developing brain. Regulates microglial chemotaxis and process outgrowth, and also the microglial response to oxidative stress and lipopolysaccharide. It suppresses PI3K and NF-kappa-B signaling in response to lipopolysaccharide; thus promoting phagocytosis, suppressing pro-inflammatory cytokine and nitric oxide production, inhibiting apoptosis and increasing expression of IL10 and TGFB. During oxidative stress, it promotes anti-apoptotic NF-kappa-B signaling and ERK signaling. Plays a role in microglial MTOR activation and metabolism. Regulates age-related changes in microglial numbers. Triggers activation of the immune responses in macrophages and dendritic cells. Mediates cytokine-induced formation of multinucleated giant cells which are formed by the fusion of macrophages. In dendritic cells, receptor of SEMA6D with PLEXNA1 as coreceptor and mediates up-regulation of chemokine receptor CCR7 and dendritic cell maturation and survival. Involved in the positive regulation of osteoclast differentiation. The protein is Triggering receptor expressed on myeloid cells 2 (Trem2) of Mus musculus (Mouse).